The sequence spans 165 residues: Disulfide bond formation protein B (165 aa).

Over 1–11 (MICSKVPVRAW) the chain is Cytoplasmic. A helical membrane pass occupies residues 12–28 (FATLGLGCLGLVAVGMA). The Periplasmic segment spans residues 29–46 (LQTLLHLAPCPLCIFQRL). A disulfide bridge links Cys-38 with Cys-41. The helical transmembrane segment at 47–61 (LYIMIGFVGLLGFVL) threads the bilayer. The Cytoplasmic portion of the chain corresponds to 62–66 (PAGRL). Residues 67–84 (LWSTLAAGLGVLGFGVAA) form a helical membrane-spanning segment. Residues 85 to 142 (YQTWMQAFPDLAPECGFTDPNAIERLVDWLGMEWPSMFLATGFCTSRDWELLGLSMAN) lie on the Periplasmic side of the membrane. Cys-99 and Cys-128 form a disulfide bridge. Residues 143-161 (WSVLIFAGIVAYAVLLFVR) traverse the membrane as a helical segment. The Cytoplasmic segment spans residues 162–165 (KDRA).

It belongs to the DsbB family.

Its subcellular location is the cell inner membrane. In terms of biological role, required for disulfide bond formation in some periplasmic proteins. Acts by oxidizing the DsbA protein. The chain is Disulfide bond formation protein B from Dechloromonas aromatica (strain RCB).